The chain runs to 508 residues: Cytochrome P450 4A12B (508 aa).

The N-terminal stretch at 1–37 is a signal peptide; that stretch reads MSASALSSIRFPGSISEYLQVASVLSLLLLLFKTAQL. Positions 319 and 455 each coordinate heme.

The protein belongs to the cytochrome P450 family. Heme is required as a cofactor. Expressed in lung, but almost undetectable in the kidneys of five different strains.

It is found in the endoplasmic reticulum membrane. The protein localises to the microsome membrane. The catalysed reaction is an organic molecule + reduced [NADPH--hemoprotein reductase] + O2 = an alcohol + oxidized [NADPH--hemoprotein reductase] + H2O + H(+). It carries out the reaction dodecanoate + reduced [NADPH--hemoprotein reductase] + O2 = 11-hydroxydodecanoate + oxidized [NADPH--hemoprotein reductase] + H2O + H(+). It catalyses the reaction dodecanoate + reduced [NADPH--hemoprotein reductase] + O2 = 12-hydroxydodecanoate + oxidized [NADPH--hemoprotein reductase] + H2O + H(+). The enzyme catalyses (5Z,8Z,11Z,14Z)-eicosatetraenoate + reduced [NADPH--hemoprotein reductase] + O2 = 18-hydroxy-(5Z,8Z,11Z,14Z)-eicosatetraenoate + oxidized [NADPH--hemoprotein reductase] + H2O + H(+). The catalysed reaction is (5Z,8Z,11Z,14Z)-eicosatetraenoate + reduced [NADPH--hemoprotein reductase] + O2 = 19-hydroxy-(5Z,8Z,11Z,14Z)-eicosatetraenoate + oxidized [NADPH--hemoprotein reductase] + H2O + H(+). It carries out the reaction (5Z,8Z,11Z,14Z)-eicosatetraenoate + reduced [NADPH--hemoprotein reductase] + O2 = 20-hydroxy-(5Z,8Z,11Z,14Z)-eicosatetraenoate + oxidized [NADPH--hemoprotein reductase] + H2O + H(+). It catalyses the reaction (5Z,8Z,11Z,14Z,17Z)-eicosapentaenoate + reduced [NADPH--hemoprotein reductase] + O2 = 19-hydroxy-(5Z,8Z,11Z,14Z,17Z)-eicosapentaenoate + oxidized [NADPH--hemoprotein reductase] + H2O + H(+). The enzyme catalyses (5Z,8Z,11Z,14Z,17Z)-eicosapentaenoate + reduced [NADPH--hemoprotein reductase] + O2 = 20-hydroxy-(5Z,8Z,11Z,14Z,17Z)-eicosapentaenoate + oxidized [NADPH--hemoprotein reductase] + H2O + H(+). The catalysed reaction is (5Z,8Z,11Z,14Z,17Z)-eicosapentaenoate + reduced [NADPH--hemoprotein reductase] + O2 = (17S,18R)-epoxy-(5Z,8Z,11Z,14Z)-eicosatetraenoate + oxidized [NADPH--hemoprotein reductase] + H2O + H(+). It carries out the reaction (5Z,8Z,11Z,14Z,17Z)-eicosapentaenoate + reduced [NADPH--hemoprotein reductase] + O2 = (17R,18S)-epoxy-(5Z,8Z,11Z,14Z)-eicosatetraenoate + oxidized [NADPH--hemoprotein reductase] + H2O + H(+). It functions in the pathway lipid metabolism; fatty acid metabolism. Activated by cytochrome b5. The Vmax almost doubles in the presence of cytochrome b5. Functionally, a cytochrome P450 monooxygenase involved in the metabolism of fatty acids and their oxygenated derivatives (oxylipins). Mechanistically, uses molecular oxygen inserting one oxygen atom into a substrate, and reducing the second into a water molecule, with two electrons provided by NADPH via cytochrome P450 reductase (CPR; NADPH-ferrihemoprotein reductase). Catalyzes predominantly the oxidation of the terminal carbon (omega-oxidation) of saturated and unsaturated fatty acids. May act as a major omega-hydroxylase for dodecanoic (lauric) acid in kidney. Participates in omega-hydroxylation of (5Z,8Z,11Z,14Z)-eicosatetraenoic acid (arachidonate) to 20-hydroxyeicosatetraenoic acid (20-HETE), a signaling molecule acting both as vasoconstrictive and natriuretic with overall effect on arterial blood pressure. Acts as an omega-hydroxylase and epoxidase toward (5Z,8Z,11Z,14Z,17Z)-eicosapentaenoc acid (EPA). Catalyzes the epoxidation of the last double bond of EPA with no preferred stereoselectivity, producing both (R,S) and (S,R) stereoisomers. Can also catalyze the omega-1 and omega-2 oxidation of fatty acids with lower efficiency. The sequence is that of Cytochrome P450 4A12B from Mus musculus (Mouse).